We begin with the raw amino-acid sequence, 542 residues long: Organic anion transporter 3 (542 aa).

Residues 1–20 (MTFSEILDRVGSMGRFQFLH) are Cytoplasmic-facing. Serine 4 bears the Phosphoserine mark. Residues 21–41 (VAILGLPILNMANHNLLQIFT) traverse the membrane as a helical segment. At 42 to 123 (AATPVHHCRP…LVCNSNKLKE (82 aa)) the chain is on the extracellular side. N-linked (GlcNAc...) asparagine glycosylation occurs at asparagine 86. Residues 124–144 (MAQSIFMAGILIGGLVLGDLS) traverse the membrane as a helical segment. Over 145–154 (DRFGRRPILT) the chain is Cytoplasmic. A helical membrane pass occupies residues 155–175 (CSYLLLAASGSGAAFSPTFPI). Tyrosine 176 is a topological domain (extracellular). The helical transmembrane segment at 177 to 197 (MVFRFLCGFGISGITLSTVIL) threads the bilayer. At 198-212 (NVEWVPTRMRAIMST) the chain is on the cytoplasmic side. A helical transmembrane segment spans residues 213-233 (ALGYCYTFGQFILPGLAYAIP). At 234–236 (QWR) the chain is on the extracellular side. The chain crosses the membrane as a helical span at residues 237-257 (WLQLTVSIPFFIFFLSSWWTP). The Cytoplasmic segment spans residues 258–327 (ESIRWLVLSG…FRIPMLRRMT (70 aa)). A helical membrane pass occupies residues 328–348 (FCLSLAWFATGFAYYSLAMGV). Topologically, residues 349 to 354 (EEFGVN) are extracellular. Residues 355–375 (LYILQIIFGGVDVPAKFITIL) form a helical membrane-spanning segment. Residues 376–386 (SLSYLGRHTTQ) lie on the Cytoplasmic side of the membrane. Residues 387–407 (AAALLLAGGAILALTFVPLDL) traverse the membrane as a helical segment. The Extracellular segment spans residues 408–471 (QTVRTVLAVF…LVKITGEVQP (64 aa)). The chain crosses the membrane as a helical span at residues 472 to 492 (FIPNIIYGITALLGGSAAFFL). Topologically, residues 493–542 (PETLNQPLPETIEDLENWSLRAKKPKQEPEVEKASQRIPLQPHGPGLGSS) are cytoplasmic. A disordered region spans residues 515–542 (KKPKQEPEVEKASQRIPLQPHGPGLGSS). Basic and acidic residues predominate over residues 517-527 (PKQEPEVEKAS).

This sequence belongs to the major facilitator (TC 2.A.1) superfamily. Organic cation transporter (TC 2.A.1.19) family.

The protein localises to the basolateral cell membrane. The catalysed reaction is estrone 3-sulfate(out) + glutarate(in) = estrone 3-sulfate(in) + glutarate(out). It catalyses the reaction estrone 3-sulfate(in) + 2-oxoglutarate(out) = estrone 3-sulfate(out) + 2-oxoglutarate(in). The enzyme catalyses glutarate(in) + 2-oxoglutarate(out) = glutarate(out) + 2-oxoglutarate(in). It carries out the reaction urate(in) + 2-oxoglutarate(out) = urate(out) + 2-oxoglutarate(in). The catalysed reaction is taurocholate(out) + glutarate(in) = taurocholate(in) + glutarate(out). It catalyses the reaction dehydroepiandrosterone 3-sulfate(out) + glutarate(in) = dehydroepiandrosterone 3-sulfate(in) + glutarate(out). The enzyme catalyses prostaglandin F2alpha(out) + glutarate(in) = prostaglandin F2alpha(in) + glutarate(out). It carries out the reaction prostaglandin F2alpha(out) + 2-oxoglutarate(in) = prostaglandin F2alpha(in) + 2-oxoglutarate(out). The catalysed reaction is (R)-carnitine(out) + 2-oxoglutarate(in) = (R)-carnitine(in) + 2-oxoglutarate(out). It catalyses the reaction glutarate(in) + (R)-carnitine(out) = glutarate(out) + (R)-carnitine(in). The enzyme catalyses prostaglandin E2(out) + 2-oxoglutarate(in) = prostaglandin E2(in) + 2-oxoglutarate(out). It carries out the reaction prostaglandin E2(out) + glutarate(in) = prostaglandin E2(in) + glutarate(out). The catalysed reaction is urate(in) + glutarate(out) = urate(out) + glutarate(in). It catalyses the reaction taurocholate(out) + 2-oxoglutarate(in) = taurocholate(in) + 2-oxoglutarate(out). The enzyme catalyses dehydroepiandrosterone 3-sulfate(out) + 2-oxoglutarate(in) = dehydroepiandrosterone 3-sulfate(in) + 2-oxoglutarate(out). It carries out the reaction kynurenate(out) + a dicarboxylate(in) = kynurenate(in) + a dicarboxylate(out). The catalysed reaction is (indol-3-yl)acetate(out) + a dicarboxylate(in) = (indol-3-yl)acetate(in) + a dicarboxylate(out). It catalyses the reaction indoxyl sulfate(out) + a dicarboxylate(in) = indoxyl sulfate(in) + a dicarboxylate(out). The enzyme catalyses N-benzoylglycine(out) + a dicarboxylate(in) = N-benzoylglycine(in) + a dicarboxylate(out). It carries out the reaction 3-carboxy-4-methyl-5-propyl-2-furanpropanoate(out) + a dicarboxylate(in) = 3-carboxy-4-methyl-5-propyl-2-furanpropanoate(in) + a dicarboxylate(out). The catalysed reaction is (6R)-L-erythro-5,6,7,8-tetrahydrobiopterin(out) + a dicarboxylate(in) = (6R)-L-erythro-5,6,7,8-tetrahydrobiopterin(in) + a dicarboxylate(out). It catalyses the reaction L-erythro-7,8-dihydrobiopterin(out) + a dicarboxylate(in) = L-erythro-7,8-dihydrobiopterin(in) + a dicarboxylate(out). The enzyme catalyses L-sepiapterin(out) + a dicarboxylate(in) = L-sepiapterin(in) + a dicarboxylate(out). Functions as an organic anion/dicarboxylate exchanger that couples organic anion uptake indirectly to the sodium gradient. Transports organic anions such as estrone 3-sulfate (E1S) and urate in exchange for dicarboxylates such as glutarate or ketoglutarate (2-oxoglutarate). Plays an important role in the excretion of endogenous and exogenous organic anions, especially from the kidney and the brain. E1S transport is pH- and chloride-dependent and may also involve E1S/cGMP exchange. Responsible for the transport of prostaglandin E2 (PGE2) and prostaglandin F2(alpha) (PGF2(alpha)) in the basolateral side of the renal tubule. Involved in the transport of neuroactive tryptophan metabolites kynurenate and xanthurenate. Functions as a biopterin transporters involved in the uptake and the secretion of coenzymes tetrahydrobiopterin (BH4), dihydrobiopterin (BH2) and sepiapterin to urine, thereby determining baseline levels of blood biopterins. May be involved in the basolateral transport of steviol, a metabolite of the popular sugar substitute stevioside. May participate in the detoxification/ renal excretion of drugs and xenobiotics, such as the histamine H(2)-receptor antagonists fexofenadine and cimetidine, the antibiotic benzylpenicillin (PCG), the anionic herbicide 2,4-dichloro-phenoxyacetate (2,4-D), the diagnostic agent p-aminohippurate (PAH), the antiviral acyclovir (ACV), and the mycotoxin ochratoxin (OTA), by transporting these exogenous organic anions across the cell membrane in exchange for dicarboxylates such as 2-oxoglutarate. Contributes to the renal uptake of potent uremic toxins (indoxyl sulfate (IS), indole acetate (IA), hippurate/N-benzoylglycine (HA) and 3-carboxy-4-methyl-5-propyl-2-furanpropionate (CMPF)), pravastatin, PCG, E1S and dehydroepiandrosterone sulfate (DHEAS), and is partly involved in the renal uptake of temocaprilat (an angiotensin-converting enzyme (ACE) inhibitor). May contribute to the release of cortisol in the adrenals. Involved in one of the detoxification systems on the choroid plexus (CP), removes substrates such as E1S or taurocholate (TC), PCG, 2,4-D and PAH, from the cerebrospinal fluid (CSF) to the blood for eventual excretion in urine and bile. Also contributes to the uptake of several other organic compounds such as the prostanoids prostaglandin E(2) and prostaglandin F(2-alpha), L-carnitine, and the therapeutic drugs allopurinol, 6-mercaptopurine (6-MP) and 5-fluorouracil (5-FU). Mediates the transport of PAH, PCG, and the statins pravastatin and pitavastatin, from the cerebrum into the blood circulation across the blood-brain barrier (BBB). In summary, plays a role in the efflux of drugs and xenobiotics, helping reduce their undesired toxicological effects on the body. The chain is Organic anion transporter 3 (SLC22A8) from Pongo abelii (Sumatran orangutan).